The primary structure comprises 507 residues: ATP synthase subunit alpha (507 aa).

171-178 (GDRQTGKT) contacts ATP.

Belongs to the ATPase alpha/beta chains family. In terms of assembly, F-type ATPases have 2 components, CF(1) - the catalytic core - and CF(0) - the membrane proton channel. CF(1) has five subunits: alpha(3), beta(3), gamma(1), delta(1), epsilon(1). CF(0) has three main subunits: a(1), b(2) and c(9-12). The alpha and beta chains form an alternating ring which encloses part of the gamma chain. CF(1) is attached to CF(0) by a central stalk formed by the gamma and epsilon chains, while a peripheral stalk is formed by the delta and b chains.

It localises to the cell inner membrane. It catalyses the reaction ATP + H2O + 4 H(+)(in) = ADP + phosphate + 5 H(+)(out). Functionally, produces ATP from ADP in the presence of a proton gradient across the membrane. The alpha chain is a regulatory subunit. This Bdellovibrio bacteriovorus (strain ATCC 15356 / DSM 50701 / NCIMB 9529 / HD100) protein is ATP synthase subunit alpha.